Consider the following 130-residue polypeptide: Ribosome-binding factor A (130 aa).

The protein belongs to the RbfA family. As to quaternary structure, monomer. Binds 30S ribosomal subunits, but not 50S ribosomal subunits or 70S ribosomes.

It localises to the cytoplasm. Its function is as follows. One of several proteins that assist in the late maturation steps of the functional core of the 30S ribosomal subunit. Associates with free 30S ribosomal subunits (but not with 30S subunits that are part of 70S ribosomes or polysomes). Required for efficient processing of 16S rRNA. May interact with the 5'-terminal helix region of 16S rRNA. In Flavobacterium psychrophilum (strain ATCC 49511 / DSM 21280 / CIP 103535 / JIP02/86), this protein is Ribosome-binding factor A.